Consider the following 254-residue polypeptide: NADPH-dependent ferric-chelate reductase (254 aa).

In terms of domain architecture, FAD-binding FR-type spans 15–136 (LRFRELTVLR…AGPRGSLVVP (122 aa)).

It belongs to the SIP oxidoreductase family.

Its subcellular location is the cytoplasm. It carries out the reaction 2 a Fe(II)-siderophore + NADP(+) + H(+) = 2 a Fe(III)-siderophore + NADPH. Functionally, plays a role in iron homeostasis under excess nickel conditions. The polypeptide is NADPH-dependent ferric-chelate reductase (yqjH) (Escherichia coli (strain K12)).